A 291-amino-acid polypeptide reads, in one-letter code: MAVVTIKNLLESGVHFGHQVRRWDPRMKKYIFAERNGIHIIDLQKTITAIREAYDMVRRTVSSGKSVLFVGTKKQSQQTIAKEAQRCGMFYVTNRWLGGMLTNFSTIRKSLSRLKKIERMEIDGTFEHLSKKEVASLRKEHAKLEKNLGGIKEMKELPGVVFIIDTRKETIAIREARRVGIPIVAVVDTNCNPEGIDYPIPGNDDAIRAISLFTQLIANAVMEAGNEHGLKIIENLQDEESGDELDESVSLHEEGREITDYENYTPPEEREYSVNDEGDVFDEDESLYEGR.

The span at 238–247 (DEESGDELDE) shows a compositional bias: acidic residues. Positions 238–291 (DEESGDELDESVSLHEEGREITDYENYTPPEEREYSVNDEGDVFDEDESLYEGR) are disordered. A compositionally biased stretch (basic and acidic residues) spans 249–259 (VSLHEEGREIT). Positions 274–291 (VNDEGDVFDEDESLYEGR) are enriched in acidic residues.

It belongs to the universal ribosomal protein uS2 family.

The sequence is that of Small ribosomal subunit protein uS2 (rpsB) from Treponema pallidum (strain Nichols).